The following is a 579-amino-acid chain: Aspartate--tRNA(Asp/Asn) ligase (579 aa).

Glutamate 171 provides a ligand contact to L-aspartate. Positions 195–198 (QLFK) are aspartate. Residue arginine 217 participates in L-aspartate binding. ATP contacts are provided by residues 217 to 219 (RDE) and glutamine 226. Histidine 444 contributes to the L-aspartate binding site. Glutamate 475 provides a ligand contact to ATP. Position 482 (arginine 482) interacts with L-aspartate. 527–530 (GLDR) contributes to the ATP binding site.

The protein belongs to the class-II aminoacyl-tRNA synthetase family. Type 1 subfamily. In terms of assembly, homodimer.

The protein resides in the cytoplasm. It carries out the reaction tRNA(Asx) + L-aspartate + ATP = L-aspartyl-tRNA(Asx) + AMP + diphosphate. In terms of biological role, aspartyl-tRNA synthetase with relaxed tRNA specificity since it is able to aspartylate not only its cognate tRNA(Asp) but also tRNA(Asn). Reaction proceeds in two steps: L-aspartate is first activated by ATP to form Asp-AMP and then transferred to the acceptor end of tRNA(Asp/Asn). The chain is Aspartate--tRNA(Asp/Asn) ligase from Thermotoga neapolitana (strain ATCC 49049 / DSM 4359 / NBRC 107923 / NS-E).